The following is a 212-amino-acid chain: ER lumen protein-retaining receptor 1 (212 aa).

The Lumenal segment spans residues 1-4 (MNLF). Residues 5 to 24 (RFLGDLSHLLAIILLLLKIW) traverse the membrane as a helical segment. Over 25 to 32 (KSRSCAGI) the chain is Cytoplasmic. The chain crosses the membrane as a helical span at residues 33-52 (SGKSQVLFAVVFTARYLDLF). The segment at 47–48 (RY) is interaction with the K-D-E-L motif on target proteins. The Lumenal segment spans residues 53–58 (TNYISL). Residues 59–79 (YNTCMKVVYIACSFTTVWLIY) traverse the membrane as a helical segment. Over 80–92 (SKFKATYDGNHDT) the chain is Cytoplasmic. The helical transmembrane segment at 93 to 110 (FRVEFLVVPTAILAFLVN) threads the bilayer. The Lumenal segment spans residues 111–116 (HDFTPL). A helical transmembrane segment spans residues 117-135 (EILWTFSIYLESVAILPQL). Topologically, residues 136-149 (FMVSKTGEAETITS) are cytoplasmic. The helical transmembrane segment at 150–168 (HYLFALGVYRTLYLFNWIW) threads the bilayer. Positions 159-169 (RTLYLFNWIWR) are interaction with the K-D-E-L motif on target proteins. Residues 169–178 (RYHFEGFFDL) lie on the Lumenal side of the membrane. Residues 179–199 (IAIVAGLVQTVLYCDFFYLYI) traverse the membrane as a helical segment. Residues 200–212 (TKVLKGKKLSLPA) are Cytoplasmic-facing. The important for recycling of cargo proteins with the sequence motif K-D-E-L from the Golgi to the endoplasmic reticulum stretch occupies residues 204–207 (KGKK). S209 bears the Phosphoserine; by PKA mark.

The protein belongs to the ERD2 family. As to quaternary structure, upon ligand binding the receptor oligomerizes and interacts with components of the transport machinery such as ARFGAP1 and ARF1. Phosphorylation by PKA at Ser-209 is required for endoplasmic reticulum retention function.

The protein localises to the golgi apparatus membrane. It is found in the cytoplasmic vesicle. It localises to the COPI-coated vesicle membrane. The protein resides in the endoplasmic reticulum membrane. Its subcellular location is the endoplasmic reticulum-Golgi intermediate compartment membrane. Functionally, receptor for the C-terminal sequence motif K-D-E-L that is present on endoplasmic reticulum resident proteins and that mediates their recycling from the Golgi back to the endoplasmic reticulum. The protein is ER lumen protein-retaining receptor 1 (KDELR1) of Homo sapiens (Human).